Here is a 181-residue protein sequence, read N- to C-terminus: MPKGGRKGGHKGRVRQYTSPEEIDAQLQAEKQKANEEDEQEEGGDGASGDPKKEKKSLDSDESEDEDDDYQQKRKGVEGLIDIENPNRVAQTTKKVTQLDLDGPKELSRREREEIEKQKAKERYMKMHLAGKTEQAKADLARLAIIRKQREEAARKKEEERKAKDDATLSGKRMQSLSLNK.

A compositionally biased stretch (basic residues) spans 1–14 (MPKGGRKGGHKGRV). Residues 1 to 118 (MPKGGRKGGH…RREREEIEKQ (118 aa)) form a disordered region. The residue at position 18 (threonine 18) is a Phosphothreonine. Residue serine 19 is modified to Phosphoserine. Residues 50-59 (DPKKEKKSLD) are compositionally biased toward basic and acidic residues. Residue lysine 52 forms a Glycyl lysine isopeptide (Lys-Gly) (interchain with G-Cter in SUMO2) linkage. Residues serine 57, serine 60, and serine 63 each carry the phosphoserine modification. A compositionally biased stretch (acidic residues) spans 60-69 (SDESEDEDDD). Tyrosine 70 is modified (phosphotyrosine). Positions 102–118 (DGPKELSRREREEIEKQ) are enriched in basic and acidic residues. Position 126 is an N6-methyllysine (lysine 126). 2 positions are modified to N6-acetyllysine: lysine 132 and lysine 164. Residues 151–167 (EEAARKKEEERKAKDDA) show a composition bias toward basic and acidic residues. Residues 151-181 (EEAARKKEEERKAKDDATLSGKRMQSLSLNK) are disordered. Phosphoserine is present on residues serine 176 and serine 178.

Belongs to the PDAP1 family. Post-translationally, phosphorylated by several kinases in vitro. In vivo, can be phosphorylated by CK2. As to expression, present in all tissues tested, including brain, lung, spleen, kidney, liver, heart, and muscle, in decreasing order of abundance.

The chain is 28 kDa heat- and acid-stable phosphoprotein (Pdap1) from Rattus norvegicus (Rat).